The chain runs to 204 residues: Guanylate kinase (204 aa).

Residues 3–181 enclose the Guanylate kinase-like domain; it reads GTLIIITAPS…ALDDLVAVVR (179 aa). 10–17 contributes to the ATP binding site; it reads APSGAGKT.

It belongs to the guanylate kinase family.

Its subcellular location is the cytoplasm. The catalysed reaction is GMP + ATP = GDP + ADP. In terms of biological role, essential for recycling GMP and indirectly, cGMP. The sequence is that of Guanylate kinase from Aromatoleum aromaticum (strain DSM 19018 / LMG 30748 / EbN1) (Azoarcus sp. (strain EbN1)).